A 272-amino-acid chain; its full sequence is Putative hydro-lyase RPD_1846 (272 aa).

It belongs to the D-glutamate cyclase family.

This chain is Putative hydro-lyase RPD_1846, found in Rhodopseudomonas palustris (strain BisB5).